Reading from the N-terminus, the 372-residue chain is 4-hydroxy-3-methylbut-2-en-1-yl diphosphate synthase (flavodoxin) (372 aa).

4 residues coordinate [4Fe-4S] cluster: C270, C273, C305, and E312.

It belongs to the IspG family. [4Fe-4S] cluster is required as a cofactor.

The enzyme catalyses (2E)-4-hydroxy-3-methylbut-2-enyl diphosphate + oxidized [flavodoxin] + H2O + 2 H(+) = 2-C-methyl-D-erythritol 2,4-cyclic diphosphate + reduced [flavodoxin]. It participates in isoprenoid biosynthesis; isopentenyl diphosphate biosynthesis via DXP pathway; isopentenyl diphosphate from 1-deoxy-D-xylulose 5-phosphate: step 5/6. Functionally, converts 2C-methyl-D-erythritol 2,4-cyclodiphosphate (ME-2,4cPP) into 1-hydroxy-2-methyl-2-(E)-butenyl 4-diphosphate. In Escherichia coli (strain SMS-3-5 / SECEC), this protein is 4-hydroxy-3-methylbut-2-en-1-yl diphosphate synthase (flavodoxin).